The sequence spans 828 residues: USP6 N-terminal-like protein (828 aa).

N-acetylmethionine is present on methionine 1. One can recognise a Rab-GAP TBC domain in the interval 100-292 (GIPLQLRGEV…RIWDIYIFEG (193 aa)). The span at 355-367 (DLPEPGKEDEYPK) shows a compositional bias: basic and acidic residues. The segment at 355–722 (DLPEPGKEDE…NSGSPKNGKL (368 aa)) is disordered. Phosphoserine occurs at positions 391, 396, and 400. A compositionally biased stretch (basic and acidic residues) spans 434-451 (KSVEEESKKLKDEADFQR). Residues 465–478 (NHAAANQNSNATSN) are compositionally biased toward low complexity. 2 stretches are compositionally biased toward basic and acidic residues: residues 498-508 (RTAKYTMEGKG) and 535-544 (KALDAEDGKR). Residues serine 546 and serine 549 each carry the phosphoserine modification. Tyrosine 582 is modified (phosphotyrosine). Serine 585 carries the phosphoserine modification. Residues 592 to 603 (PSSSPSKVSNKF) are compositionally biased toward polar residues. Phosphoserine is present on residues serine 642, serine 655, serine 659, serine 676, and serine 680. 2 stretches are compositionally biased toward polar residues: residues 648-666 (TANSSFASPQFSPGTQLNP) and 673-683 (STLSVSASPEK). The segment covering 686–697 (SRPSPLVLPSSR) has biased composition (low complexity). Serine 716 carries the post-translational modification Phosphoserine. Tyrosine 729 is modified (phosphotyrosine). The interval 789 to 817 (KASPAAEDASPSGYPYSGPPPPAYHYRNR) is disordered.

In terms of assembly, interacts with EPS8. In terms of tissue distribution, widely expressed.

The protein resides in the golgi apparatus. It is found in the cytoplasmic vesicle. Functionally, acts as a GTPase-activating protein for RAB5A and RAB43. Involved in receptor trafficking. In complex with EPS8 inhibits internalization of EGFR. Involved in retrograde transport from the endocytic pathway to the Golgi apparatus. Involved in the transport of Shiga toxin from early and recycling endosomes to the trans-Golgi network. Required for structural integrity of the Golgi complex. This Homo sapiens (Human) protein is USP6 N-terminal-like protein (USP6NL).